A 200-amino-acid polypeptide reads, in one-letter code: Systemin (200 aa).

Residues 1-33 are disordered; the sequence is MGTPSYDIKNKGDDMQEEPKVKLHHEKGGDEKE. Propeptides lie at residues 1-178 and 197-200; these read MGTP…REDL and NNKL. The stretch at 3–8 is one 1; truncated repeat; sequence TPSYDI. A compositionally biased stretch (basic and acidic residues) spans 8–33; it reads IKNKGDDMQEEPKVKLHHEKGGDEKE. Repeat copies occupy residues 37–45, 80–88, 117–125, and 145–153. 2 disordered regions span residues 106 to 159 and 178 to 200; these read EEEE…MEGE and LAVQ…NNKL. Composition is skewed to basic and acidic residues over residues 111–140 and 146–158; these read EKEK…KVEH and KETP…KMEG.

All organs except the roots. Transported out of wounds to distal tissues.

It localises to the cytoplasm. Its function is as follows. Activates a lipid-based signal transduction pathway in which linolenic acid is converted to jasmonic acid, a potent activator of defense gene transcription, including proteinase inhibitor. In Solanum lycopersicum (Tomato), this protein is Systemin.